Reading from the N-terminus, the 317-residue chain is tRNA dimethylallyltransferase (317 aa).

14–21 (GPTAVGKT) is an ATP binding site. Residue 16 to 21 (TAVGKT) coordinates substrate. The interaction with substrate tRNA stretch occupies residues 39–42 (DSMQ).

The protein belongs to the IPP transferase family. In terms of assembly, monomer. Mg(2+) is required as a cofactor.

The enzyme catalyses adenosine(37) in tRNA + dimethylallyl diphosphate = N(6)-dimethylallyladenosine(37) in tRNA + diphosphate. Its function is as follows. Catalyzes the transfer of a dimethylallyl group onto the adenine at position 37 in tRNAs that read codons beginning with uridine, leading to the formation of N6-(dimethylallyl)adenosine (i(6)A). The protein is tRNA dimethylallyltransferase of Bacillus cereus (strain ATCC 10987 / NRS 248).